The primary structure comprises 380 residues: Outer membrane protein 40 (380 aa).

The signal sequence occupies residues Met-1–Ala-21. Pyrrolidone carboxylic acid is present on Gln-22. Residues Pro-270–Glu-380 form the OmpA-like domain.

It belongs to the outer membrane OOP (TC 1.B.6) superfamily. As to quaternary structure, disulfide-linked heterodimer with Omp41.

Its subcellular location is the cell outer membrane. May have porin activity and function in peptidoglycan binding. This is Outer membrane protein 40 from Porphyromonas gingivalis (strain ATCC BAA-308 / W83).